A 590-amino-acid polypeptide reads, in one-letter code: Aspartate--tRNA(Asp/Asn) ligase (590 aa).

E178 is a binding site for L-aspartate. Residues 202–205 (QIYK) are aspartate. R224 contributes to the L-aspartate binding site. ATP contacts are provided by residues 224–226 (RDE) and Q233. H453 serves as a coordination point for L-aspartate. E487 provides a ligand contact to ATP. R494 is a binding site for L-aspartate. Position 539 to 542 (539 to 542 (GLDR)) interacts with ATP.

The protein belongs to the class-II aminoacyl-tRNA synthetase family. Type 1 subfamily. Homodimer.

Its subcellular location is the cytoplasm. It carries out the reaction tRNA(Asx) + L-aspartate + ATP = L-aspartyl-tRNA(Asx) + AMP + diphosphate. Its function is as follows. Aspartyl-tRNA synthetase with relaxed tRNA specificity since it is able to aspartylate not only its cognate tRNA(Asp) but also tRNA(Asn). Reaction proceeds in two steps: L-aspartate is first activated by ATP to form Asp-AMP and then transferred to the acceptor end of tRNA(Asp/Asn). This Treponema denticola (strain ATCC 35405 / DSM 14222 / CIP 103919 / JCM 8153 / KCTC 15104) protein is Aspartate--tRNA(Asp/Asn) ligase.